A 325-amino-acid polypeptide reads, in one-letter code: Nod factor export ATP-binding protein I (325 aa).

In terms of domain architecture, ABC transporter spans 27 to 257; sequence LELRKVRKQY…QIGCDVVEVY (231 aa). ATP is bound at residue 59 to 66; sequence GPNGAGKT.

The protein belongs to the ABC transporter superfamily. Lipooligosaccharide exporter (TC 3.A.1.102) family. The complex is composed of two ATP-binding proteins (NodI) and two transmembrane proteins (NodJ).

Its subcellular location is the cell inner membrane. Functionally, part of the ABC transporter complex NodIJ involved in the export of the nodulation factors (Nod factors), the bacterial signal molecules that induce symbiosis and subsequent nodulation induction. Nod factors are LCO (lipo-chitin oligosaccharide), a modified beta-1,4-linked N-acetylglucosamine oligosaccharide. This subunit is responsible for energy coupling to the transport system. The polypeptide is Nod factor export ATP-binding protein I (Cupriavidus pinatubonensis (strain JMP 134 / LMG 1197) (Cupriavidus necator (strain JMP 134))).